Here is a 1124-residue protein sequence, read N- to C-terminus: Regulator of nonsense transcripts 1 (1124 aa).

Positions 1–410 (MSVEAYGPSS…LRSSVGAPVE (410 aa)) are sufficient for interaction with RENT2. Phosphoserine is present on residues S10 and S31. The tract at residues 39–69 (TLPSQTQTPPGGPGGAGGPGGAGAGGAAGQL) is disordered. The span at 51-66 (PGGAGGPGGAGAGGAA) shows a compositional bias: gly residues. In terms of domain architecture, Upf1 CH-rich spans 110–267 (TKDLPVHACS…NKLEELWKEN (158 aa)). Zn(2+) is bound by residues C118, C121, C132, S135, C140, H150, H154, C160, C178, C181, C204, and C208. The C3H stretch occupies residues 118 to 150 (CSYCGIHDPACVVYCNTSKKWFCNGRGNTSGSH). Positions 132-160 (CNTSKKWFCNGRGNTSGSHIVNHLVRAKC) are CC/SHH/C. The C4 stretch occupies residues 178 to 208 (CYNCGCRNVFLLGFIPAKADSVVVLLCRQPC). ATP is bound by residues Q481 and 501–505 (GTGKT). S560 is modified (phosphoserine). ATP-binding residues include Q671, Y708, and E839. A Phosphoserine modification is found at S951. Disordered stretches follow at residues 1004–1053 (FGQA…VASQ) and 1066–1091 (SMSQPSQMSQPGLSQPELSQDSYLGD). Omega-N-methylarginine is present on R1014. Basic residues predominate over residues 1020 to 1029 (KTGRGGRQKN). Residues 1036–1053 (PSQTTLPNSQASQDVASQ) are compositionally biased toward polar residues. Residues 1066 to 1081 (SMSQPSQMSQPGLSQP) are compositionally biased toward low complexity. Phosphoserine is present on residues S1084, S1102, S1105, and S1122. 2 short sequence motifs ([ST]-Q motif) span residues 1084 to 1085 (SQ) and 1102 to 1103 (SQ). The segment at 1105–1124 (STYQGERAYQHGGVTGLSQY) is disordered.

This sequence belongs to the DNA2/NAM7 helicase family. Found in a post-splicing messenger ribonucleoprotein (mRNP) complex. Associates with the exon junction complex (EJC). Associates with the SGM1C complex; is phosphorylated by the complex kinase component SGM1. Part of a complex composed of SMG1, DHX34 and UPF1; within the complex DHX34 acts as a scaffolding protein to facilitate SMG1 phosphorylation of UPF1. Interacts with UPF2. Interacts with UPF3A and UPF3B. Interacts with EST1A. Interacts with SLBP. Interacts (when hyperphosphorylated) with PNRC2. Interacts with AGO1 and AGO2. Interacts with GSPT2. Interacts with isoform 1 and isoform 5 of ADAR/ADAR1. Interacts with SMG7. Interacts with ZC3H12A; this interaction occurs in a mRNA translationally active- and termination-dependent manner and is essential for ZC3H12A-mediated degradation of target mRNAs. Interacts with CPSF6. Interacts with MOV10; the interaction is direct and RNA-dependent. Interacts with SHFL; the interaction increases in the presence of RNA. Interacts with UPF2 and DDX4; interactions are mediated by TDRD6. Interacts with DHX34 and PABPC1/PABP1; the interactions are RNA-independent. Interacts with RBM46. In terms of processing, phosphorylated by SMG1; required for formation of mRNA surveillance complexes. Localizes in male germ cells.

The protein localises to the cytoplasm. It localises to the P-body. It is found in the nucleus. The protein resides in the perinuclear region. It catalyses the reaction ATP + H2O = ADP + phosphate + H(+). In terms of biological role, RNA-dependent helicase required for nonsense-mediated decay (NMD) of aberrant mRNAs containing premature stop codons and modulates the expression level of normal mRNAs. Is recruited to mRNAs upon translation termination and undergoes a cycle of phosphorylation and dephosphorylation; its phosphorylation appears to be a key step in NMD. Recruited by release factors to stalled ribosomes together with the SMG1C protein kinase complex to form the transient SURF (SMG1-UPF1-eRF1-eRF3) complex. In EJC-dependent NMD, the SURF complex associates with the exon junction complex (EJC) (located 50-55 or more nucleotides downstream from the termination codon) through UPF2 and allows the formation of an UPF1-UPF2-UPF3 surveillance complex which is believed to activate NMD. Phosphorylated UPF1 is recognized by EST1B/SMG5, SMG6 and SMG7 which are thought to provide a link to the mRNA degradation machinery involving exonucleolytic and endonucleolytic pathways, and to serve as adapters to protein phosphatase 2A (PP2A), thereby triggering UPF1 dephosphorylation and allowing the recycling of NMD factors. UPF1 can also activate NMD without UPF2 or UPF3, and in the absence of the NMD-enhancing downstream EJC indicative for alternative NMD pathways. Plays a role in replication-dependent histone mRNA degradation at the end of phase S; the function is independent of UPF2. For the recognition of premature termination codons (PTC) and initiation of NMD a competitive interaction between UPF1 and PABPC1 with the ribosome-bound release factors is proposed. The ATPase activity of UPF1 is required for disassembly of mRNPs undergoing NMD. Together with UPF2 and dependent on TDRD6, mediates the degradation of mRNA harboring long 3'UTR by inducing the NMD machinery. Also capable of unwinding double-stranded DNA and translocating on single-stranded DNA. This Mus musculus (Mouse) protein is Regulator of nonsense transcripts 1.